Consider the following 209-residue polypeptide: Eukaryotic translation initiation factor 4E (209 aa).

Residues 51 to 52, 97 to 98, and 153 to 158 each bind mRNA; these read WH, WE, and RKQAYR.

This sequence belongs to the eukaryotic initiation factor 4E family. As to quaternary structure, eIF4F is a multi-subunit complex, the composition of which varies with external and internal environmental conditions. It is composed of at least eIF4A, eIF4E and eIF4G. eIF4E is also known to interact with other partners.

In terms of biological role, recognizes and binds the 7-methylguanosine-containing mRNA cap during an early step in the initiation of protein synthesis and facilitates ribosome binding by inducing the unwinding of the mRNAs secondary structures. This Candida albicans (strain SC5314 / ATCC MYA-2876) (Yeast) protein is Eukaryotic translation initiation factor 4E (TIF45).